An 862-amino-acid chain; its full sequence is Putative PIP5K1A and PSMD4-like protein (862 aa).

The 369-residue stretch at 28–396 (TSSALKGAIQ…WFQRFMCNTV (369 aa)) folds into the PIPK domain. Disordered stretches follow at residues 404 to 424 (PSPS…GSSG) and 453 to 481 (HLGC…PSFS). Low complexity predominate over residues 412–424 (SGSSFSQRAGSSG). The VWFA domain maps to 490-673 (MLTTSVDNSE…LADALISFPI (184 aa)). Residues 696–715 (SADPELALVLRVFMEEQRQR) form the UIM 1 domain. Residues 716–740 (QEEEARQAAAASAAEAGIATTGTED) are disordered. Over residues 722 to 731 (QAAAASAAEA) the composition is skewed to low complexity. Residues 766-783 (MTEEEKIVCAMQMSLQGA) enclose the UIM 2 domain. Residues 826-862 (NLPGVDPNNEAIRNAVGSLASQATKDSKKDKKEEDKK) are disordered. Positions 850 to 862 (KDSKKDKKEEDKK) are enriched in basic and acidic residues.

In terms of tissue distribution, testis-specific.

It is found in the cytoplasm. Its function is as follows. Has negligible PIP5 kinase activity. Binds to ubiquitinated proteins. The sequence is that of Putative PIP5K1A and PSMD4-like protein (PIPSL) from Homo sapiens (Human).